The primary structure comprises 443 residues: Mitochondrial distribution and morphology protein 10 (443 aa).

This sequence belongs to the MDM10 family. Component of the ER-mitochondria encounter structure (ERMES) or MDM complex, composed of MMM1, MDM10, MDM12 and MDM34. Associates with the mitochondrial outer membrane sorting assembly machinery SAM(core) complex.

The protein resides in the mitochondrion outer membrane. In terms of biological role, component of the ERMES/MDM complex, which serves as a molecular tether to connect the endoplasmic reticulum and mitochondria. Components of this complex are involved in the control of mitochondrial shape and protein biogenesis and may function in phospholipid exchange. MDM10 is involved in the late assembly steps of the general translocase of the mitochondrial outer membrane (TOM complex). Functions in the TOM40-specific route of the assembly of outer membrane beta-barrel proteins, including the association of TOM40 with the receptor TOM22 and small TOM proteins. Can associate with the SAM(core) complex as well as the MDM12-MMM1 complex, both involved in late steps of the major beta-barrel assembly pathway, that is responsible for biogenesis of all outer membrane beta-barrel proteins. May act as a switch that shuttles between both complexes and channels precursor proteins into the TOM40-specific pathway. Plays a role in mitochondrial morphology and in the inheritance of mitochondria. The chain is Mitochondrial distribution and morphology protein 10 from Pyricularia oryzae (strain 70-15 / ATCC MYA-4617 / FGSC 8958) (Rice blast fungus).